Reading from the N-terminus, the 868-residue chain is MKSADIRQAFLTFFEEHGHTIVPSSSLVPANDPTLLFTNAGMVPFKDVFLGRDPRPYVRATSAQRCVRAGGKHNDLDNVGYTARHHTFFEMLGNFSFGDYFKRGAIRFAWTFLTERLGLPADKLWVTVHVSDDEAERIWKDEIGIDPARFSKLDEDNFWQMGDTGPCGPSSEIFFDHGPEVAGGPPGSPEEDGDRYIEIWNLVFMQFDRDSAGTLNPLPKPSIDTGMGLERVAAVLQGVHSNYEIDLFQNLLNAASEATGYDDTSAPSLRVIADHIRSCAFLITDDVLPSNEGRGYVLRRIIRRAIRHGHKLGAREPFFHTLVAALDAEMGAAYPELRKARPRIEKVLLKEEEQFARTLDHGMGLLTEALETLDGEVLPGETVFKLYDTYGFPFDLTADVCRERGVTLDEVGFQRELEAQRERARAASQFGADYTAALDLEGETAFTGYERLEDEARVTALVDREGNALAALEAGQHGVVVLDRTPFYGESGGQAGDTGYLEADGMRFQVTDTQKQGGHHLHHGVLVEGRLDVGASVTPRVDASLRAATMRNHSATHLLHEALRQVLGEHVQQKGSLVTAERLRFDVSHFEAMTRAQLDEVERIVNAQILANAATRIEHMTLDEAKAKGAAALFEAKYADSVRVLTIGADDFSIELCGGTHVARSGDIGCFHILSEAGVAAGVRRIEAVTGEGALAYFRDQEAKVARVAEQLKAKPEQVEARLEATLERNRTLEKELERLKAKLASATSGDMLADVREVAGVKLLAKQVEGVGGKELRGLLDQLKNKLGSGVIVLGVAGDEKVSLIAGVTDDLTARLKAGDLVKHVAEQVGGKGGGRADMAQAGGSRPQALPDALASVPSWVEARLGE.

Zn(2+)-binding residues include histidine 553, histidine 557, cysteine 657, and histidine 661. Residues 831–851 (GGKGGGRADMAQAGGSRPQAL) form a disordered region.

This sequence belongs to the class-II aminoacyl-tRNA synthetase family. Requires Zn(2+) as cofactor.

It localises to the cytoplasm. It catalyses the reaction tRNA(Ala) + L-alanine + ATP = L-alanyl-tRNA(Ala) + AMP + diphosphate. In terms of biological role, catalyzes the attachment of alanine to tRNA(Ala) in a two-step reaction: alanine is first activated by ATP to form Ala-AMP and then transferred to the acceptor end of tRNA(Ala). Also edits incorrectly charged Ser-tRNA(Ala) and Gly-tRNA(Ala) via its editing domain. This is Alanine--tRNA ligase from Chromohalobacter salexigens (strain ATCC BAA-138 / DSM 3043 / CIP 106854 / NCIMB 13768 / 1H11).